Reading from the N-terminus, the 178-residue chain is Large ribosomal subunit protein uL6 (178 aa).

It belongs to the universal ribosomal protein uL6 family. Part of the 50S ribosomal subunit.

Functionally, this protein binds to the 23S rRNA, and is important in its secondary structure. It is located near the subunit interface in the base of the L7/L12 stalk, and near the tRNA binding site of the peptidyltransferase center. The chain is Large ribosomal subunit protein uL6 from Campylobacter fetus subsp. fetus (strain 82-40).